The primary structure comprises 478 residues: UDP-N-acetylmuramate--L-alanine ligase (478 aa).

An ATP-binding site is contributed by 112–118 (GTHGKTT).

Belongs to the MurCDEF family.

It localises to the cytoplasm. It catalyses the reaction UDP-N-acetyl-alpha-D-muramate + L-alanine + ATP = UDP-N-acetyl-alpha-D-muramoyl-L-alanine + ADP + phosphate + H(+). Its pathway is cell wall biogenesis; peptidoglycan biosynthesis. Functionally, cell wall formation. The chain is UDP-N-acetylmuramate--L-alanine ligase from Polynucleobacter asymbioticus (strain DSM 18221 / CIP 109841 / QLW-P1DMWA-1) (Polynucleobacter necessarius subsp. asymbioticus).